The chain runs to 471 residues: MATKVEDDSKPRLNACFIGHVDSGKSTTVGMLSYQLGAVDKREMEKYEKEAALNNKETFYLAYLTDKTDAERKRGITITTTLVNLPTEKFNINILDCPGHKDFVKNMVTGASQADVAVVIVPASGFESCVGVGGMLKTHIMISGILGCEKLIVCVNKMDEIPENKRMEKFNEVSAEMLRIVKRSHKDKNPIIIPISAFKGINLTKKGEKFEWFKGWKEKEGSSVIYTLEEALNYQDVPERHNDKPLRMPITKVCSIAGVGKIFTGRVEYGTITPNLKITIQPAGVVGETRSVEIHNKPRSMIPCGENCGVALKGGVIGEIDKVDAGHVISANDENKAVAYPGAKIRTIVVGRPKGLSPGYTPQINFGNCHSPGRIAKILSKVVGKEVHENPENVANGENFTGIVVFQKPLVIDKMERFQNLAKFALMDSNGVVGIGNVMEPLTRDQLLKDYGIDLNEDPKAAKKAASKKKA.

Positions 10-239 constitute a tr-type G domain; that stretch reads KPRLNACFIG…EALNYQDVPE (230 aa). Residues 19–26 are G1; it reads GHVDSGKS. Position 19–26 (19–26) interacts with GTP; it reads GHVDSGKS. Residues 75-79 form a G2 region; the sequence is GITIT. The tract at residues 96-99 is G3; it reads DCPG. Residues 96 to 100 and 156 to 159 contribute to the GTP site; these read DCPGH and NKMD. The segment at 156 to 159 is G4; it reads NKMD. Residues 196 to 198 are G5; sequence SAF.

It belongs to the TRAFAC class translation factor GTPase superfamily. Classic translation factor GTPase family. EF-Tu/EF-1A subfamily. In terms of assembly, component of the eukaryotic elongation factor 1 complex (eEF1).

It is found in the cytoplasm. It participates in protein biosynthesis; polypeptide chain elongation. Its function is as follows. GTP-binding component of the eukaryotic elongation factor 1 complex (eEF1). In its active GTP-bound form, binds to and delivers aminoacyl-tRNA to the A-site of ribosomes during protein biosynthesis. In the presence of a correct codon-anticodon match between the aminoacyl-tRNA and the A-site codon of the ribosome-bound mRNA, the ribosome acts as a GTPase activator and the GTP is hydrolyzed. The inactive GDP-bound form leaves the ribosome and must be recycled by its guanine nucleotide exchange factor (GEF) (eEF1B subcomplex) before binding another molecule of aminoacyl-tRNA. Required for nuclear export of aminoacyl-tRNAs. May also be involved in translational quality control by targeting cotranslationally damaged proteins to the proteasome. This is Elongation factor 1-alpha (TEF1) from Encephalitozoon cuniculi (strain GB-M1) (Microsporidian parasite).